A 120-amino-acid chain; its full sequence is Peptidyl-tRNA hydrolase (120 aa).

Belongs to the PTH2 family.

Its subcellular location is the cytoplasm. It carries out the reaction an N-acyl-L-alpha-aminoacyl-tRNA + H2O = an N-acyl-L-amino acid + a tRNA + H(+). Functionally, the natural substrate for this enzyme may be peptidyl-tRNAs which drop off the ribosome during protein synthesis. This is Peptidyl-tRNA hydrolase from Pyrobaculum aerophilum (strain ATCC 51768 / DSM 7523 / JCM 9630 / CIP 104966 / NBRC 100827 / IM2).